A 218-amino-acid chain; its full sequence is Adenylate kinase (218 aa).

10 to 15 (GAGKGT) lines the ATP pocket. The segment at 30 to 59 (STGDMLRAAVKAGTPLGQQAKAVMESGGLV) is NMP. Residues Thr-31, Arg-36, 57 to 59 (GLV), 85 to 88 (GFPR), and Gln-92 each bind AMP. The tract at residues 122–159 (GRRSHPASGRTYHVKFNPPKVEGKDDITGEDLIQRKDD) is LID. Residues Arg-123 and 132–133 (TY) contribute to the ATP site. Residues Arg-156 and Arg-167 each contribute to the AMP site. Residue Gly-203 participates in ATP binding.

It belongs to the adenylate kinase family. Monomer.

It localises to the cytoplasm. It catalyses the reaction AMP + ATP = 2 ADP. Its pathway is purine metabolism; AMP biosynthesis via salvage pathway; AMP from ADP: step 1/1. Its function is as follows. Catalyzes the reversible transfer of the terminal phosphate group between ATP and AMP. Plays an important role in cellular energy homeostasis and in adenine nucleotide metabolism. The chain is Adenylate kinase from Variovorax paradoxus (strain S110).